We begin with the raw amino-acid sequence, 577 residues long: Thrombomodulin (577 aa).

The N-terminal stretch at Met-1–Gly-16 is a signal peptide. At Leu-17 to Ser-517 the chain is on the extracellular side. The C-type lectin domain occupies Val-31 to Phe-167. N-linked (GlcNAc...) asparagine glycosylation occurs at Asn-113. A disulfide bridge links Cys-135 with Cys-156. EGF-like domains lie at Gly-240–Ala-280 and Val-283–Glu-323. N-linked (GlcNAc...) asparagine glycosylation occurs at Asn-243. 18 disulfides stabilise this stretch: Cys-244–Cys-255, Cys-251–Cys-264, Cys-266–Cys-279, Cys-287–Cys-295, Cys-291–Cys-307, Cys-309–Cys-322, Cys-328–Cys-339, Cys-335–Cys-348, Cys-350–Cys-361, Cys-368–Cys-377, Cys-373–Cys-387, Cys-389–Cys-403, Cys-407–Cys-416, Cys-412–Cys-424, Cys-426–Cys-438, Cys-444–Cys-454, Cys-449–Cys-463, and Cys-465–Cys-479. Asn-256 is a glycosylation site (N-linked (GlcNAc...) asparagine). Positions Asp-324–Val-362 constitute an EGF-like 3; calcium-binding domain. EGF-like domains follow at residues Leu-364–Glu-404 and Cys-403–Thr-439. A glycan (N-linked (GlcNAc...) asparagine) is linked at Asn-408. The region spanning Asp-440–Asp-480 is the EGF-like 6; calcium-binding domain. The segment at Ser-476–Arg-513 is disordered. Positions Lys-477–Glu-492 are enriched in basic and acidic residues. The O-linked (Xyl...) (chondroitin sulfate) serine glycan is linked to Ser-494. Over residues Pro-498 to Ala-512 the composition is skewed to pro residues. Residues Gly-518–Leu-541 form a helical membrane-spanning segment. The Cytoplasmic portion of the chain corresponds to Arg-542–Phe-577.

As to quaternary structure, interacts with ITGAL, ITGAM and ITGB2. Interacts with thrombin/F2; this interaction switches the specificity of thrombin from a procoagulant to an anticoagulant and antifibrinolytic protease. Interacts with ANGP1 and ANGP2; these interactions significantly inhibit the generation of activated PC and TAFIa/CPB2 by the thrombin/thrombomodulin complex. Interacts with PF4; this interaction enhances generation of activated protein C. Interacts with HMGB1; this interaction inhibits HMGB1 inflammatory activity. Endothelial cells are unique in synthesizing thrombomodulin.

Its subcellular location is the membrane. Its function is as follows. Endothelial cell receptor that plays a critical role in regulating several physiological processes including hemostasis, coagulation, fibrinolysis, inflammation, and angiogenesis. Acts as a cofactor for thrombin activation of protein C/PROC on the surface of vascular endothelial cells leading to initiation of the activated protein C anticoagulant pathway. Also accelerates the activation of the plasma carboxypeptidase B2/CPB2, which catalyzes removal of C-terminal basic amino acids from its substrates including kinins or anaphylatoxins leading to fibrinolysis inhibition. Plays critical protective roles in changing the cleavage specificity of protease-activated receptor 1/PAR1, inhibiting endothelial cell permeability and inflammation. Suppresses inflammation distinctly from its anticoagulant cofactor activity by sequestering HMGB1 thereby preventing it from engaging cellular receptors such as RAGE and contributing to the inflammatory response. The polypeptide is Thrombomodulin (Thbd) (Mus musculus (Mouse)).